We begin with the raw amino-acid sequence, 614 residues long: High-affinity choline transporter 1 (614 aa).

A helical transmembrane segment spans residues glycine 6 to arginine 26. The Cytoplasmic segment spans residues lysine 27–serine 44. The helical transmembrane segment at isoleucine 45–asparagine 65 threads the bilayer. Residues glycine 66–glycine 75 lie on the Extracellular side of the membrane. The helical transmembrane segment at leucine 76–phenylalanine 96 threads the bilayer. At alanine 97–arginine 119 the chain is on the cytoplasmic side. A helical transmembrane segment spans residues methionine 120 to leucine 140. The Extracellular segment spans residues alanine 141–serine 158. A helical transmembrane segment spans residues valine 159–alanine 179. Residues tyrosine 180–glutamine 185 are Cytoplasmic-facing. A helical transmembrane segment spans residues leucine 186–valine 206. The Extracellular segment spans residues glycine 207–histidine 225. Residues tryptophan 226–phenylalanine 246 form a helical membrane-spanning segment. At glutamine 247–serine 262 the chain is on the cytoplasmic side. Residues tyrosine 263 to alanine 283 form a helical membrane-spanning segment. At lysine 284–serine 305 the chain is on the extracellular side. Asparagine 289 carries an N-linked (GlcNAc...) asparagine glycan. Residues methionine 306–glycine 326 traverse the membrane as a helical segment. Residues alanine 327–glutamate 364 are Cytoplasmic-facing. Residues isoleucine 365–leucine 385 form a helical membrane-spanning segment. Over threonine 386–tryptophan 394 the chain is Extracellular. A helical membrane pass occupies residues serine 395–phenylalanine 415. Residues lysine 416 to serine 424 are Cytoplasmic-facing. A helical membrane pass occupies residues leucine 425 to leucine 445. Over alanine 446 to threonine 467 the chain is Extracellular. A helical membrane pass occupies residues methionine 468–phenylalanine 488. Residues glutamate 489–phenylalanine 614 lie on the Cytoplasmic side of the membrane. Positions alanine 583–phenylalanine 614 are disordered.

It belongs to the sodium:solute symporter (SSF) (TC 2.A.21) family.

The protein resides in the membrane. In terms of biological role, imports choline from the extracellular space to the neuron with high affinity. Rate-limiting step in acetylcholine synthesis. Sodium ion and chloride ion dependent. The protein is High-affinity choline transporter 1 of Drosophila melanogaster (Fruit fly).